The following is a 518-amino-acid chain: 2-isopropylmalate synthase (518 aa).

The Pyruvate carboxyltransferase domain maps to 5 to 268 (IIIFDTTLRD…DTRINTQEIH (264 aa)). Positions 14, 202, 204, and 238 each coordinate Mn(2+). The regulatory domain stretch occupies residues 393–518 (TLDVITSQCI…DLKLHKIAGV (126 aa)).

Belongs to the alpha-IPM synthase/homocitrate synthase family. LeuA type 1 subfamily. Homodimer. It depends on Mn(2+) as a cofactor.

It is found in the cytoplasm. It catalyses the reaction 3-methyl-2-oxobutanoate + acetyl-CoA + H2O = (2S)-2-isopropylmalate + CoA + H(+). The protein operates within amino-acid biosynthesis; L-leucine biosynthesis; L-leucine from 3-methyl-2-oxobutanoate: step 1/4. Catalyzes the condensation of the acetyl group of acetyl-CoA with 3-methyl-2-oxobutanoate (2-ketoisovalerate) to form 3-carboxy-3-hydroxy-4-methylpentanoate (2-isopropylmalate). The polypeptide is 2-isopropylmalate synthase (Pasteurella multocida (strain Pm70)).